The chain runs to 193 residues: Ion-translocating oxidoreductase complex subunit B (193 aa).

The interval 1–26 is hydrophobic; it reads MSTMLIAVILLTLLALFFGVLLGFAA. Residues 32 to 90 enclose the 4Fe-4S domain; it reads EGNPIVDELEAILPQTQCGQCGYPGCRPYAEAIANGDKVNKCPPGGTATMEKLASLMGV. [4Fe-4S] cluster contacts are provided by cysteine 49, cysteine 52, cysteine 57, cysteine 73, cysteine 114, cysteine 117, cysteine 120, cysteine 124, cysteine 144, cysteine 147, cysteine 150, and cysteine 154. 2 consecutive 4Fe-4S ferredoxin-type domains span residues 105–134 and 136–164; these read KVAY…GAGK and MHTV…MVPV.

It belongs to the 4Fe4S bacterial-type ferredoxin family. RnfB subfamily. In terms of assembly, the complex is composed of six subunits: RnfA, RnfB, RnfC, RnfD, RnfE and RnfG. The cofactor is [4Fe-4S] cluster.

It localises to the cell inner membrane. Its function is as follows. Part of a membrane-bound complex that couples electron transfer with translocation of ions across the membrane. This Shewanella oneidensis (strain ATCC 700550 / JCM 31522 / CIP 106686 / LMG 19005 / NCIMB 14063 / MR-1) protein is Ion-translocating oxidoreductase complex subunit B.